A 70-amino-acid chain; its full sequence is Frenatin 4.1 (70 aa).

The first 22 residues, methionine 1–cysteine 22, serve as a signal peptide directing secretion. The propeptide occupies glutamate 23–arginine 46. Lysine 68 carries the post-translational modification Lysine amide.

This sequence belongs to the frog skin active peptide (FSAP) family. Frenatin subfamily. In terms of tissue distribution, expressed by the skin glands.

It localises to the secreted. Its subcellular location is the target cell membrane. Peptide with unknown function. Does not show antimicrobial activity against S.aureus (MIC&gt;512 ug/mL), E.coli (MIC&gt;512 ug/mL) and C.albicans (MIC&gt;512 ug/mL). Does not show hemolytic activity. In terms of biological role, antimicrobial peptide with activity against E.coli (MIC=128 ug/mL or 54 uM) and C.albicans (MIC=256 ug/mL or 108 uM). Does not show activity against S.aureus (MIC&gt;512 ug/mL). Does not show hemolytic activity. The sequence is that of Frenatin 4.1 from Nyctimystes infrafrenatus (White-lipped tree frog).